We begin with the raw amino-acid sequence, 50 residues long: Protease inhibitor 2 (50 aa).

Residues E2–C50 form the Kazal-like domain. 2 disulfides stabilise this stretch: C10-C29 and C18-C50. 2 N-linked (GlcNAc...) asparagine glycosylation sites follow: N30 and N41.

Serine protease inhibitor. Strongly inhibits human neutrophil elastase and trypsin, also inhibits porcine pancreatic elastase and subtilisin A. Does not inhibit chymotrypsin, plasma kallikrein, pancreatic kallikrein, thrombin or papain. This is Protease inhibitor 2 from Cenchritis muricatus (Beaded periwinkle).